Reading from the N-terminus, the 274-residue chain is Diaminopimelate epimerase (274 aa).

2 residues coordinate substrate: asparagine 11 and asparagine 76. The Proton donor role is filled by cysteine 85. Residues 86-87 (GN), asparagine 157, asparagine 189, and 207-208 (ER) contribute to the substrate site. Catalysis depends on cysteine 216, which acts as the Proton acceptor. 217 to 218 (GT) is a binding site for substrate.

Belongs to the diaminopimelate epimerase family. As to quaternary structure, homodimer.

Its subcellular location is the cytoplasm. It carries out the reaction (2S,6S)-2,6-diaminopimelate = meso-2,6-diaminopimelate. It participates in amino-acid biosynthesis; L-lysine biosynthesis via DAP pathway; DL-2,6-diaminopimelate from LL-2,6-diaminopimelate: step 1/1. In terms of biological role, catalyzes the stereoinversion of LL-2,6-diaminopimelate (L,L-DAP) to meso-diaminopimelate (meso-DAP), a precursor of L-lysine and an essential component of the bacterial peptidoglycan. This chain is Diaminopimelate epimerase, found in Thermobifida fusca (strain YX).